The sequence spans 476 residues: 8-amino-7-oxononanoate synthase (476 aa).

Arginine 24 lines the substrate pocket. A pyridoxal 5'-phosphate-binding site is contributed by 171–172 (GF). Residue histidine 210 coordinates substrate. Residues serine 260, 285 to 288 (DDAH), and 316 to 319 (TLSK) contribute to the pyridoxal 5'-phosphate site. Lysine 319 is modified (N6-(pyridoxal phosphate)lysine). Residue threonine 427 participates in substrate binding. A Peroxisomal targeting signal PTS1 motif is present at residues 474 to 476 (PKL).

The protein belongs to the class-II pyridoxal-phosphate-dependent aminotransferase family. BioF subfamily. In terms of assembly, monomer. It depends on pyridoxal 5'-phosphate as a cofactor.

The protein resides in the cytoplasm. It is found in the cytosol. It localises to the peroxisome. The catalysed reaction is 6-carboxyhexanoyl-[ACP] + L-alanine + H(+) = (8S)-8-amino-7-oxononanoate + holo-[ACP] + CO2. The protein operates within cofactor biosynthesis; biotin biosynthesis; 8-amino-7-oxononanoate from pimeloyl-CoA: step 1/1. In terms of biological role, catalyzes the decarboxylative condensation of pimeloyl-[acyl-carrier protein] and L-alanine to produce 8-amino-7-oxononanoate (AON), [acyl-carrier protein], and carbon dioxide. Required for the biosynthesis of D-biotin that prevents light-mediated cell death and modulates defense gene expression, probably by avoiding hydrogen peroxide H(2)O(2) accumulation. The sequence is that of 8-amino-7-oxononanoate synthase from Arabidopsis thaliana (Mouse-ear cress).